The sequence spans 75 residues: Defensin-like protein (75 aa).

The N-terminal stretch at 1-24 (MEKKSIAGLCFLFLVLFVAQEVVV) is a signal peptide. 4 disulfides stabilise this stretch: C31-C75, C42-C63, C48-C69, and C52-C71.

Belongs to the DEFL family.

The protein resides in the secreted. Functionally, this protein is required for germination. This Vigna unguiculata (Cowpea) protein is Defensin-like protein.